We begin with the raw amino-acid sequence, 567 residues long: Signal transducer and activator of transcription b (567 aa).

One can recognise an SH2 domain in the interval 449 to 548 (WYDGLVYGFC…LGGRNKPRIR (100 aa)).

Belongs to the transcription factor STAT family. In terms of assembly, may interact with sodium-dependent transporter snf-12; the interaction is probably direct.

It localises to the cytoplasm. The protein resides in the nucleus. The protein localises to the vesicle. In terms of biological role, carries out a dual function: signal transduction and activation of transcription. Required, in concert with transcription factor elt-3, for up-regulation of the vacuolar H(+)-ATPase and acceleration of lysosome maturation at molt. As part of the innate immune response to molting and injury of the adult epidermis, positively regulates the expression of epidermal antimicrobial peptides, such as nlp-29. Through positively modulating the expression of epidermal antimicrobial peptides, such as nlp-29, plays a role in resistance to fungal infection and in the response to physical wounding and phorbol ester PMA treatment. Functions cell autonomously in the epidermis, in concert with sodium-dependent transporter snf-12, probably acting at vesicular membranes, downstream of a p38 MAPK/pmk-1 pathway. The polypeptide is Signal transducer and activator of transcription b (Caenorhabditis elegans).